Consider the following 411-residue polypeptide: Exodeoxyribonuclease 7 large subunit (411 aa).

It belongs to the XseA family. In terms of assembly, heterooligomer composed of large and small subunits.

It localises to the cytoplasm. It catalyses the reaction Exonucleolytic cleavage in either 5'- to 3'- or 3'- to 5'-direction to yield nucleoside 5'-phosphates.. In terms of biological role, bidirectionally degrades single-stranded DNA into large acid-insoluble oligonucleotides, which are then degraded further into small acid-soluble oligonucleotides. In Mycobacterium sp. (strain JLS), this protein is Exodeoxyribonuclease 7 large subunit.